The sequence spans 555 residues: MMNHQFSSLERDRMLTDMTKKTYDLFIIGGGITGAGTALDAASRGMKVALSEMQDFAAGTSSRSTKLVHGGLRYLKQFEVKMVAEVGKERAIVYENGPHVTTPEWMLLPFHKGGTFGSFTTSIGLRVYDFLAGVKKSERRSMLSAKETLQKEPLVKKDGLKGGGYYVEYRTDDARLTIEVMKEAVKFGAEPVNYSKVKELLYEKGKAVGVLIEDVLTKKEYKVYAKKIVNATGPWVDQLREKDHSKNGKHLQHTKGIHLVFDQSVFPLKQAVYFDTPDGRMVFAIPREGKTYVGTTDTVYKEALEHPRMTTEDRDYVIKSINYMFPELNITANDIESSWAGLRPLIHEEGKDPSEISRKDEIWTSDSGLITIAGGKLTGYRKMAEHIVDLVRDRLKEEGEKDFGPCKTKNMPISGGHVGGSKNLMSFVTAKTKEGIAAGLSEKDAKQLAIRYGSNVDRVFDRVEALKDEAAKRNIPVHILAEAEYSIEEEMTATPADFFVRRTGRLFFDINWVRTYKDAVIDFMSERFQWDEQAKNKHTENLNKLLHDAVVPLEQ.

Residue 24–52 (DLFIIGGGITGAGTALDAASRGMKVALSE) participates in FAD binding.

Belongs to the FAD-dependent glycerol-3-phosphate dehydrogenase family. Requires FAD as cofactor.

It localises to the cytoplasm. It catalyses the reaction a quinone + sn-glycerol 3-phosphate = dihydroxyacetone phosphate + a quinol. It functions in the pathway polyol metabolism; glycerol degradation via glycerol kinase pathway; glycerone phosphate from sn-glycerol 3-phosphate (aerobic route): step 1/1. This chain is Aerobic glycerol-3-phosphate dehydrogenase (glpD), found in Bacillus subtilis (strain 168).